Consider the following 1221-residue polypeptide: A disintegrin and metalloproteinase with thrombospondin motifs 18 (1221 aa).

A signal peptide spans 1-47 (MECALLLACAFPAAGSGPPRGLAGLGRVAKALQLCCLCCASVAAALA). A propeptide spanning residues 48 to 284 (SDSSSGASGL…EYGSSGRPRR (237 aa)) is cleaved from the precursor. N-linked (GlcNAc...) asparagine glycosylation is found at N151 and N190. Positions 252-259 (HFCGRRKK) match the Cysteine switch motif. C254 is a Zn(2+) binding site. Residues 258 to 291 (KKYAPKPPTEDTYLRFDEYGSSGRPRRSAGKSQK) form a disordered region. Over residues 265–275 (PTEDTYLRFDE) the composition is skewed to basic and acidic residues. One can recognise a Peptidase M12B domain in the interval 293–498 (LNVETLVVAD…PQAGCLVDEP (206 aa)). The N-linked (GlcNAc...) asparagine glycan is linked to N313. 11 disulfides stabilise this stretch: C369/C420, C395/C402, C414/C493, C453/C477, C521/C546, C532/C553, C541/C572, C566/C577, C601/C638, C605/C643, and C616/C628. H436 contacts Zn(2+). Residue E437 is part of the active site. Residues H440 and H446 each coordinate Zn(2+). In terms of domain architecture, Disintegrin spans 498 to 577 (PKQAGQYKYP…LSMWCRQGQC (80 aa)). Positions 589 to 644 (HGQWSAWSKWSECSRTCGGGVKFQERHCNNPKPQYGGLFCPGSSRIYQLCNINPCN) constitute a TSP type-1 1 domain. 3 N-linked (GlcNAc...) asparagine glycosylation sites follow: N745, N838, and N909. A spacer region spans residues 750–876 (FYKGLYLNQH…TPPATKRPAY (127 aa)). 4 consecutive TSP type-1 domains span residues 931-990 (CPAY…NSHA), 991-1049 (CPPQ…GRCP), 1052-1116 (SRLQ…RACP), and 1123-1178 (MVAG…NFCP). Residues 1184-1221 (EDPSCVDFFNWCHLVPQHGVCNHKFYGKQCCKSCTRKI) form the PLAC domain.

Zn(2+) is required as a cofactor. Post-translationally, the precursor is cleaved by a furin endopeptidase. In terms of processing, glycosylated. Can be O-fucosylated by POFUT2 on a serine or a threonine residue found within the consensus sequence C1-X(2)-(S/T)-C2-G of the TSP type-1 repeat domains where C1 and C2 are the first and second cysteine residue of the repeat, respectively. Fucosylated repeats can then be further glycosylated by the addition of a beta-1,3-glucose residue by the glucosyltransferase, B3GALTL. Fucosylation mediates the efficient secretion of ADAMTS family members. Can also be C-glycosylated with one or two mannose molecules on tryptophan residues within the consensus sequence W-X-X-W of the TPRs, and N-glycosylated. These other glycosylations can also facilitate secretion. As to expression, expressed in fetal lung, liver, and kidney and in adult brain, prostate, submaxillary gland, and endothelium.

The protein resides in the secreted. The protein localises to the extracellular space. It is found in the extracellular matrix. The chain is A disintegrin and metalloproteinase with thrombospondin motifs 18 (ADAMTS18) from Homo sapiens (Human).